Consider the following 4062-residue polypeptide: Transcription-associated protein 1 (4062 aa).

The disordered stretch occupies residues 531–562; the sequence is LASEPSTSEDADESGGDPNKLPPPTKEGKKTS. TPR repeat units follow at residues 1346 to 1379 and 1677 to 1714; these read LDGVQNYMFNCPDGFDFEKDMDMYKRYLSHLLDI and RRSFIRRIIVYQSSGPLRQEFMDTPEYFEKLIDLDDEE. A compositionally biased stretch (basic and acidic residues) spans 2659-2670; the sequence is VETEMKREEPEP. The disordered stretch occupies residues 2659 to 2692; the sequence is VETEMKREEPEPMEVDEKDSQDDSKDAGEPKEKE. Over residues 2671–2680 the composition is skewed to acidic residues; sequence MEVDEKDSQD. Residues 2681-2692 show a composition bias toward basic and acidic residues; sequence DSKDAGEPKEKE. The 612-residue stretch at 2800 to 3411 folds into the FAT domain; that stretch reads LIEFISSKHE…FYHIREAVSV (612 aa). Residues 2847 to 2880 form a TPR 3 repeat; that stretch reads IETLESLGTLYNEISEFDQFAAIWERRAVFPDTM. One can recognise a PI3K/PI4K catalytic domain in the interval 3682–4046; it reads EPNFEIVIKG…DCVSLISRAK (365 aa). The G-loop stretch occupies residues 3688 to 3694; sequence VIKGGQV. Residues 3902–3910 form a catalytic loop region; that stretch reads NLTPMGPDQ. The activation loop stretch occupies residues 3922 to 3950; sequence NPSYRFEIRGGRSLHDIQHFGHEVPFRLT. In terms of domain architecture, FATC spans 4031–4062; the sequence is AKLRKDDCVSLISRAKDSDNLARMPPTYHAWF.

This sequence belongs to the PI3/PI4-kinase family. TRA1 subfamily. Interacts with histone acetyltransferase Tip60 homolog mys-1. Probably a component of a complex with histone acetyltransferase (HAT) activity, at least composed of mys-1 and trr-1. In terms of tissue distribution, expressed in germ cells and somatic cells.

The protein localises to the nucleus. Its subcellular location is the chromosome. Its function is as follows. Influences germ cell fate in hermaphrodites. Acts downstream of tra-2 and tra-3 and through the Tip60 histone acetyltransferase complex to regulate germ cell fate decisions. Required for spermatogenesis and embryonic development. Acts with tra-2 to promote expression of fog-3 and control male tail development. Involved in the negative regulation of vulval development. Involved in the positive regulation of transcription factor daf-16, probably acting by histone acetylation; thereby modulating stress resistance. Plays a role in acetylation of nucleosomal histone H4, probably acting as a component of the Tip60 histone acetyltransferase complex. In Caenorhabditis elegans, this protein is Transcription-associated protein 1.